The following is a 481-amino-acid chain: Matrilin-3 (481 aa).

The N-terminal stretch at 1–27 (MLLSAPLRHLPGLLLLLWPLLLLPSLA) is a signal peptide. Positions 78-253 (DLVFIIDSSR…GVIEKLSARF (176 aa)) constitute a VWFA domain. Arg193 is modified (omega-N-methylarginine). EGF-like domains follow at residues 259–300 (ALDQ…KTCS), 301–342 (AIDK…RTCA), 343–384 (ALDK…KTCS), and 385–426 (VRNK…KTCS). 12 cysteine pairs are disulfide-bonded: Cys263–Cys274, Cys270–Cys284, Cys286–Cys299, Cys305–Cys316, Cys312–Cys326, Cys328–Cys341, Cys347–Cys358, Cys354–Cys368, Cys370–Cys383, Cys389–Cys400, Cys396–Cys410, and Cys412–Cys425. The N-linked (GlcNAc...) asparagine glycan is linked to Asn321. Position 436 is a phosphoserine; by FAM20C (Ser436). The stretch at 451–475 (EKVSSHLQKLNTKLDNILKKLKVTE) forms a coiled coil.

In terms of assembly, can form homooligomers (monomers, dimers, trimers and tetramers) and heterooligomers with matrilin-1. Interacts with COMP. Component of a complex containing at least CRELD2, MANF, MATN3 and PDIA4. As to expression, strongly expressed in growing skeletal tissue such as epiphyseal growth plate or in bone undergoing growth and remodeling. In the bone, actively synthesized in osteoblasts and osteocytes. Expressed in cartilage of sternum, femur, vertebrae, trachea, articular and epiphyseal cartilage, cartilage of developing bones and bones.

The protein localises to the secreted. Its function is as follows. Major component of the extracellular matrix of cartilage and may play a role in the formation of extracellular filamentous networks. In Mus musculus (Mouse), this protein is Matrilin-3 (Matn3).